Consider the following 530-residue polypeptide: UDP-glucuronosyltransferase 2B15 (530 aa).

A signal peptide spans 1-23; the sequence is MSLKWTSVFLLIQLSCYFSSGSC. Residue asparagine 65 is glycosylated (N-linked (GlcNAc...) asparagine). Position 136 is an N6-succinyllysine (lysine 136). N-linked (GlcNAc...) asparagine glycosylation is found at asparagine 316 and asparagine 483. Residues 495 to 515 traverse the membrane as a helical segment; sequence IAFLLACVATVIFIITKFCLF.

This sequence belongs to the UDP-glycosyltransferase family. In terms of tissue distribution, expressed in many tissues. Present in liver, prostate and testis.

Its subcellular location is the endoplasmic reticulum membrane. It carries out the reaction glucuronate acceptor + UDP-alpha-D-glucuronate = acceptor beta-D-glucuronoside + UDP + H(+). The catalysed reaction is 17alpha-estradiol + UDP-alpha-D-glucuronate = 17alpha-estradiol 3-O-(beta-D-glucuronate) + UDP + H(+). It catalyses the reaction 16alpha,17alpha-estriol + UDP-alpha-D-glucuronate = 16alpha,17alpha-estriol 3-O-(beta-D-glucuronate) + UDP + H(+). The enzyme catalyses 17beta-hydroxy-5alpha-androstan-3-one + UDP-alpha-D-glucuronate = 5alpha-dihydrotestosterone 17-O-(beta-D-glucuronate) + UDP + H(+). In terms of biological role, UDP-glucuronosyltransferase (UGT) that catalyzes phase II biotransformation reactions in which lipophilic substrates are conjugated with glucuronic acid to increase the metabolite's water solubility, thereby facilitating excretion into either the urine or bile. Essential for the elimination and detoxification of drugs, xenobiotics and endogenous compounds. Catalyzes the glucuronidation of endogenous steroid hormones such as androgens (testosterone, androsterone) and estrogens (estradiol, epiestradiol, estriol, catechol estrogens). Displays glucuronidation activity toward several classes of xenobiotic substrates, including phenolic compounds (eugenol, 4-nitrophenol, 4-hydroxybiphenyl) and phenylpropanoids (naringenin, coumarins). Catalyzes the glucuronidation of monoterpenoid alcohols such as borneol, menthol and isomenthol, a class of natural compounds used in essential oils. In Homo sapiens (Human), this protein is UDP-glucuronosyltransferase 2B15.